The primary structure comprises 407 residues: Phosphonoacetate hydrolase (407 aa).

The Zn(2+) site is built by D25, T64, D202, H206, D241, H242, and H368. 2 residues coordinate substrate: T64 and D202. H242 and H368 together coordinate substrate.

It belongs to the alkaline phosphatase family. PhnA subfamily. In terms of assembly, homodimer. It depends on Zn(2+) as a cofactor.

The catalysed reaction is phosphonoacetate + H2O = acetate + phosphate + H(+). Functionally, specifically hydrolyzes phosphonoacetate. Does not have activity on other organophosphonates or acetates. The polypeptide is Phosphonoacetate hydrolase (Pseudomonas putida (Arthrobacter siderocapsulatus)).